The sequence spans 419 residues: UDP-N-acetylglucosamine 1-carboxyvinyltransferase (419 aa).

22-23 serves as a coordination point for phosphoenolpyruvate; sequence KN. Arg-93 lines the UDP-N-acetyl-alpha-D-glucosamine pocket. The active-site Proton donor is the Cys-117. Cys-117 carries the post-translational modification 2-(S-cysteinyl)pyruvic acid O-phosphothioketal. Asp-307 and Ile-329 together coordinate UDP-N-acetyl-alpha-D-glucosamine.

Belongs to the EPSP synthase family. MurA subfamily.

The protein localises to the cytoplasm. The enzyme catalyses phosphoenolpyruvate + UDP-N-acetyl-alpha-D-glucosamine = UDP-N-acetyl-3-O-(1-carboxyvinyl)-alpha-D-glucosamine + phosphate. Its pathway is cell wall biogenesis; peptidoglycan biosynthesis. Cell wall formation. Adds enolpyruvyl to UDP-N-acetylglucosamine. This chain is UDP-N-acetylglucosamine 1-carboxyvinyltransferase, found in Shewanella woodyi (strain ATCC 51908 / MS32).